The chain runs to 297 residues: Ribonuclease H2 subunit A (297 aa).

The RNase H type-2 domain occupies 21-248; it reads PCVLGIDEAG…ASTIVEKRCV (228 aa). Residues Asp-27, Glu-28, and Asp-138 each coordinate a divalent metal cation.

The protein belongs to the RNase HII family. Eukaryotic subfamily. It depends on Mn(2+) as a cofactor. Mg(2+) is required as a cofactor.

It carries out the reaction Endonucleolytic cleavage to 5'-phosphomonoester.. Catalytic subunit of RNase HII, an endonuclease that specifically degrades the RNA of RNA:DNA hybrids. Participates in DNA replication, possibly by mediating the removal of lagging-strand Okazaki fragment RNA primers during DNA replication. Mediates the excision of single ribonucleotides from DNA:RNA duplexes. In Caenorhabditis elegans, this protein is Ribonuclease H2 subunit A (rnh-2).